Reading from the N-terminus, the 137-residue chain is Probable Hsp20 family chaperone (137 aa).

The 113-residue stretch at 25–137 (LTNNNNIMKT…PKEKHYIKLN (113 aa)) folds into the sHSP domain.

This sequence belongs to the small heat shock protein (HSP20) family.

In terms of biological role, probable chaperone. The sequence is that of Probable Hsp20 family chaperone from Onion yellows phytoplasma (strain OY-M).